We begin with the raw amino-acid sequence, 160 residues long: Transcription elongation factor GreA (160 aa).

Belongs to the GreA/GreB family.

Its function is as follows. Necessary for efficient RNA polymerase transcription elongation past template-encoded arresting sites. The arresting sites in DNA have the property of trapping a certain fraction of elongating RNA polymerases that pass through, resulting in locked ternary complexes. Cleavage of the nascent transcript by cleavage factors such as GreA or GreB allows the resumption of elongation from the new 3'terminus. GreA releases sequences of 2 to 3 nucleotides. This is Transcription elongation factor GreA from Francisella tularensis subsp. tularensis (strain FSC 198).